Here is a 437-residue protein sequence, read N- to C-terminus: Methylenetetrahydrofolate--tRNA-(uracil-5-)-methyltransferase TrmFO (437 aa).

Residue 9–14 (GGGLAG) participates in FAD binding.

It belongs to the MnmG family. TrmFO subfamily. Requires FAD as cofactor.

Its subcellular location is the cytoplasm. It catalyses the reaction uridine(54) in tRNA + (6R)-5,10-methylene-5,6,7,8-tetrahydrofolate + NADH + H(+) = 5-methyluridine(54) in tRNA + (6S)-5,6,7,8-tetrahydrofolate + NAD(+). The catalysed reaction is uridine(54) in tRNA + (6R)-5,10-methylene-5,6,7,8-tetrahydrofolate + NADPH + H(+) = 5-methyluridine(54) in tRNA + (6S)-5,6,7,8-tetrahydrofolate + NADP(+). In terms of biological role, catalyzes the folate-dependent formation of 5-methyl-uridine at position 54 (M-5-U54) in all tRNAs. The protein is Methylenetetrahydrofolate--tRNA-(uracil-5-)-methyltransferase TrmFO of Moorella thermoacetica (strain ATCC 39073 / JCM 9320).